Reading from the N-terminus, the 405-residue chain is Imidazolonepropionase (405 aa).

The Fe(3+) site is built by H73 and H75. Zn(2+)-binding residues include H73 and H75. Residues R82, Y145, and H178 each contribute to the 4-imidazolone-5-propanoate site. Position 145 (Y145) interacts with N-formimidoyl-L-glutamate. Fe(3+) is bound at residue H243. Residue H243 participates in Zn(2+) binding. Q246 contacts 4-imidazolone-5-propanoate. D318 contributes to the Fe(3+) binding site. D318 is a binding site for Zn(2+). N320 and G322 together coordinate N-formimidoyl-L-glutamate. T323 contributes to the 4-imidazolone-5-propanoate binding site.

The protein belongs to the metallo-dependent hydrolases superfamily. HutI family. Zn(2+) is required as a cofactor. The cofactor is Fe(3+).

The protein resides in the cytoplasm. The enzyme catalyses 4-imidazolone-5-propanoate + H2O = N-formimidoyl-L-glutamate. The protein operates within amino-acid degradation; L-histidine degradation into L-glutamate; N-formimidoyl-L-glutamate from L-histidine: step 3/3. Functionally, catalyzes the hydrolytic cleavage of the carbon-nitrogen bond in imidazolone-5-propanoate to yield N-formimidoyl-L-glutamate. It is the third step in the universal histidine degradation pathway. The sequence is that of Imidazolonepropionase from Brucella anthropi (strain ATCC 49188 / DSM 6882 / CCUG 24695 / JCM 21032 / LMG 3331 / NBRC 15819 / NCTC 12168 / Alc 37) (Ochrobactrum anthropi).